Reading from the N-terminus, the 685-residue chain is Protein DIA2 (685 aa).

3 TPR repeats span residues 6 to 39, 70 to 103, and 104 to 137; these read IDRS…ARSY, LVLL…DAYN, and LKGY…AGEA. The 48-residue stretch at 207–254 folds into the F-box domain; sequence IDYIATLPVEIIERIMANMDTRSIIRCYSVCKLWKYRLERLPHLYQEF. 7 LRR repeats span residues 300–323, 353–377, 454–480, 499–517, 518–542, 562–585, and 598–622; these read ILLL…CKAE, KLNL…NFHT, MPNL…IVQV, FDRM…LREV, FQSL…LLQP, ARDL…LLPN, and RKNI…GYEL.

This sequence belongs to the DIA2 family. Forms a SCF ubiquitin ligase complex which binds to DNA replication origins.

It is found in the nucleus. Its function is as follows. F-box protein component of a SCF ubiquitin ligase complex involved in ubiquitin-dependent protein degradation. The SCF-DIA2 complex is specifically involved in the pheromone induced degradation of phosphorylated TEC1. Involved in DNA replication, genome stability, and the control of cell cycle, probably through its association to replication origins to facilitate the ubiquitination of another origin-binding protein. This Eremothecium gossypii (strain ATCC 10895 / CBS 109.51 / FGSC 9923 / NRRL Y-1056) (Yeast) protein is Protein DIA2 (DIA2).